Reading from the N-terminus, the 739-residue chain is UPF0313 protein YgiQ (739 aa).

The 279-residue stretch at 372–650 folds into the Radical SAM core domain; sequence AYEMIRFSVN…KALLRYHDPA (279 aa). Positions 386, 390, and 393 each coordinate [4Fe-4S] cluster. A disordered region spans residues 685 to 739; the sequence is REARRQNRNTRPALTKHTPMATQRQTPATAKKASSTQSRPVNAGAKKRPKAAVGR. Polar residues predominate over residues 704-724; that stretch reads MATQRQTPATAKKASSTQSRP. The span at 729–739 shows a compositional bias: basic residues; it reads AKKRPKAAVGR.

The protein belongs to the UPF0313 family. The cofactor is [4Fe-4S] cluster.

This chain is UPF0313 protein YgiQ, found in Shigella flexneri.